The primary structure comprises 777 residues: Homoaconitase, mitochondrial (777 aa).

A mitochondrion-targeting transit peptide spans 1–35 (MFKRTGSLLLRCRASRVPVIGRPLISLSTSSTSLS). The segment at 47 to 74 (LRRYTEASSSTTQTSPSSSSWPAPDAAP) is disordered. Residues 52–74 (EASSSTTQTSPSSSSWPAPDAAP) are compositionally biased toward low complexity. [4Fe-4S] cluster-binding residues include cysteine 398, cysteine 466, and cysteine 469.

Belongs to the aconitase/IPM isomerase family. [4Fe-4S] cluster is required as a cofactor.

It localises to the mitochondrion. It catalyses the reaction (2R,3S)-homoisocitrate = cis-homoaconitate + H2O. The protein operates within amino-acid biosynthesis; L-lysine biosynthesis via AAA pathway; L-alpha-aminoadipate from 2-oxoglutarate: step 3/5. Functionally, catalyzes the reversible hydration of cis-homoaconitate to (2R,3S)-homoisocitrate, a step in the alpha-aminoadipate pathway for lysine biosynthesis. This chain is Homoaconitase, mitochondrial (lys4), found in Aspergillus fumigatus (strain ATCC MYA-4609 / CBS 101355 / FGSC A1100 / Af293) (Neosartorya fumigata).